The chain runs to 282 residues: Cyanocobalamin reductase / alkylcobalamin dealkylase (282 aa).

Residues Asp-104, 115 to 118 (ILAQ), 129 to 131 (YYQ), Cys-149, and Ile-160 each bind substrate. A disordered region spans residues 234 to 282 (LGLAQPSEKPSSPSPDLPFTTPAPKKPGNPSRARSWLSPRVSPPASPGP). Phosphoserine occurs at positions 245, 247, 275, and 279.

The protein belongs to the MMACHC family. In terms of assembly, monomer in the absence of bound substrate. Homodimer; dimerization is triggered by binding to FMN or adenosylcobalamin. Interacts with LMBRD1 and ABCD4; the interaction ensures the transport of cobalamin from the lysosome to the cytoplasm. Forms a multiprotein complex with MMADHC, MTR and MTRR; the interaction with MTR could modulate MMACHC-dependent processing of cobalamin. Heterodimer with MMADHC; the interaction might play a role in the regulation of the balance between AdoCbl and MeCbl synthesis. It depends on FAD as a cofactor. FMN is required as a cofactor. Widely expressed. Expressed at higher level in fetal liver. Also expressed in spleen, lymph node, thymus and bone marrow. Weakly or not expressed in peripheral blood leukocytes.

Its subcellular location is the cytoplasm. It localises to the cytosol. The catalysed reaction is 2 cob(II)alamin-[cyanocobalamin reductase] + 2 hydrogen cyanide + NADP(+) = 2 cyanocob(III)alamin + 2 apo-[cyanocobalamin reductase] + NADPH + H(+). It carries out the reaction apo-[alkylcobalamin reductase] + an R-cob(III)alamin + glutathione = cob(I)alamin-[alkylcobalamin reductase] + an S-substituted glutathione + H(+). The enzyme catalyses apo-[alkylcobalamin reductase] + methylcob(III)alamin + glutathione = S-methyl glutathione + cob(I)alamin-[alkylcobalamin reductase] + H(+). It catalyses the reaction apo-[alkylcobalamin reductase] + adenosylcob(III)alamin + glutathione = S-adenosylglutathione + cob(I)alamin-[alkylcobalamin reductase] + H(+). Its function is as follows. Cobalamin (vitamin B12) cytosolic chaperone that catalyzes the reductive decyanation of cyanocob(III)alamin (cyanocobalamin, CNCbl) to yield cob(II)alamin and cyanide, using FAD or FMN as cofactors and NADPH as cosubstrate. Cyanocobalamin constitutes the inactive form of vitamin B12 introduced from the diet, and is converted into the active cofactors methylcobalamin (MeCbl) involved in methionine biosynthesis, and 5'-deoxyadenosylcobalamin (AdoCbl) involved in the TCA cycle. Forms a complex with the lysosomal transporter ABCD4 and its chaperone LMBRD1, to transport cobalamin across the lysosomal membrane into the cytosol. The processing of cobalamin in the cytosol occurs in a multiprotein complex composed of at least MMACHC, MMADHC, MTRR (methionine synthase reductase) and MTR (methionine synthase) which may contribute to shuttle safely and efficiently cobalamin towards MTR in order to produce methionine. Also acts as a glutathione transferase by catalyzing the dealkylation of the alkylcob(III)alamins MeCbl and AdoCbl, using the thiolate of glutathione for nucleophilic displacement to generate cob(I)alamin and the corresponding glutathione thioether. The conversion of incoming MeCbl or AdoCbl into a common intermediate cob(I)alamin is necessary to meet the cellular needs for both cofactors. Cysteine and homocysteine cannot substitute for glutathione in this reaction. In Homo sapiens (Human), this protein is Cyanocobalamin reductase / alkylcobalamin dealkylase.